Reading from the N-terminus, the 116-residue chain is Vesicle-associated membrane protein 5 (116 aa).

The Cytoplasmic portion of the chain corresponds to 1 to 72; it reads MAGKELERCQ…RWENARCRIY (72 aa). One can recognise a v-SNARE coiled-coil homology domain in the interval 5 to 65; the sequence is ELERCQRQAD…KTLAQKKRWE (61 aa). 3 positions are modified to phosphoserine: Ser-41, Ser-48, and Ser-49. A helical; Anchor for type IV membrane protein membrane pass occupies residues 73 to 93; the sequence is MGLAVGIALLILLIVLLVIFL. Residues 94–116 are Vesicular-facing; sequence PQSSKGSSAPQVQDAGPASGPGE. The disordered stretch occupies residues 97–116; it reads SKGSSAPQVQDAGPASGPGE.

The protein belongs to the synaptobrevin family.

It localises to the cell membrane. The protein resides in the endomembrane system. It is found in the golgi apparatus. The protein localises to the trans-Golgi network membrane. Its function is as follows. May participate in trafficking events that are associated with myogenesis, such as myoblast fusion and/or GLUT4 trafficking. In Bos taurus (Bovine), this protein is Vesicle-associated membrane protein 5 (VAMP5).